Consider the following 108-residue polypeptide: Large ribosomal subunit protein uL22 (108 aa).

Belongs to the universal ribosomal protein uL22 family. As to quaternary structure, part of the 50S ribosomal subunit.

Functionally, this protein binds specifically to 23S rRNA; its binding is stimulated by other ribosomal proteins, e.g. L4, L17, and L20. It is important during the early stages of 50S assembly. It makes multiple contacts with different domains of the 23S rRNA in the assembled 50S subunit and ribosome. In terms of biological role, the globular domain of the protein is located near the polypeptide exit tunnel on the outside of the subunit, while an extended beta-hairpin is found that lines the wall of the exit tunnel in the center of the 70S ribosome. This chain is Large ribosomal subunit protein uL22, found in Nitratiruptor sp. (strain SB155-2).